Reading from the N-terminus, the 243-residue chain is Urease accessory protein UreF (243 aa).

The protein belongs to the UreF family. As to quaternary structure, ureD, UreF and UreG form a complex that acts as a GTP-hydrolysis-dependent molecular chaperone, activating the urease apoprotein by helping to assemble the nickel containing metallocenter of UreC. The UreE protein probably delivers the nickel.

It localises to the cytoplasm. Required for maturation of urease via the functional incorporation of the urease nickel metallocenter. The chain is Urease accessory protein UreF from Xanthobacter autotrophicus (strain ATCC BAA-1158 / Py2).